Reading from the N-terminus, the 799-residue chain is 1,4-alpha-glucan-branching enzyme 2, chloroplastic/amyloplastic (799 aa).

Residues 1–57 (MAFRVSGAVLGGAVRAPRLTGGGEGSLVFRHTGLFLTRGARVGCSGTHGAMRAAAAA) constitute a chloroplast transit peptide. (1,4-alpha-D-glucosyl)n is bound by residues Trp196 and Lys232. The active-site Nucleophile is the Asp447. Glu502 (proton donor) is an active-site residue.

It belongs to the glycosyl hydrolase 13 family. GlgB subfamily. As to quaternary structure, monomer.

The protein localises to the plastid. It is found in the chloroplast. The protein resides in the amyloplast. It catalyses the reaction Transfers a segment of a (1-&gt;4)-alpha-D-glucan chain to a primary hydroxy group in a similar glucan chain.. Its pathway is glycan biosynthesis; starch biosynthesis. Functionally, catalyzes the formation of the alpha-1,6-glucosidic linkages in starch by scission of a 1,4-alpha-linked oligosaccharide from growing alpha-1,4-glucan chains and the subsequent attachment of the oligosaccharide to the alpha-1,6 position. The chain is 1,4-alpha-glucan-branching enzyme 2, chloroplastic/amyloplastic (SBE1) from Zea mays (Maize).